The following is a 452-amino-acid chain: Low-affinity putrescine importer PlaP (452 aa).

Residues 1–16 (MSHNVTPNTSRVELRK) are Cytoplasmic-facing. A helical transmembrane segment spans residues 17 to 37 (TLTLVPVVMMGLAYMQPMTLF). Residues 38–48 (DTFGIVSGLTD) lie on the Periplasmic side of the membrane. Residues 49–69 (GHVPTAYAFALIAILFTALSY) form a helical membrane-spanning segment. Residues 70–95 (GKLVRRYPSAGSAYTYAQKSISPTVG) are Cytoplasmic-facing. A helical membrane pass occupies residues 96 to 116 (FMVGWSSLLDYLFAPMINILL). The Periplasmic segment spans residues 117–123 (AKIYFEA). The helical transmembrane segment at 124–144 (LVPSIPSWMFVVALVAFMTAF) threads the bilayer. The Cytoplasmic portion of the chain corresponds to 145-158 (NLRSLKSVANFNTV). The chain crosses the membrane as a helical span at residues 159–179 (IVVLQVVLIAVILGMVVYGVF). Topologically, residues 180–199 (EGEGAGTLASTRPFWSGDAH) are periplasmic. A helical membrane pass occupies residues 200 to 220 (VIPMITGATILCFSFTGFDGI). The Cytoplasmic portion of the chain corresponds to 221-237 (SNLSEETKDAERVIPRA). The chain crosses the membrane as a helical span at residues 238-258 (IFLTALIGGMIFIFATYFLQL). The Periplasmic portion of the chain corresponds to 259–283 (YFPDISRFKDPDASQPEIMLYVAGK). The chain crosses the membrane as a helical span at residues 284 to 304 (AFQVGALIFSTITVLASGMAA). The Cytoplasmic portion of the chain corresponds to 305–339 (HAGVARLMYVMGRDGVFPKSFFGYVHPKWRTPAMN). A run of 2 helical transmembrane segments spans residues 340-360 (IILV…MATA) and 361-381 (LINF…ISQF). At 382–394 (WIREKRNKTLKDH) the chain is on the cytoplasmic side. A helical transmembrane segment spans residues 395 to 415 (FQYLFLPMCGALTVGALWVNL). Topologically, residues 416 to 417 (EE) are periplasmic. A helical transmembrane segment spans residues 418–438 (SSMVLGLIWAAIGLIYLACVT). Over 439–452 (KSFRNPVPQYEDVA) the chain is Cytoplasmic.

This sequence belongs to the amino acid-polyamine-organocation (APC) superfamily.

The protein localises to the cell inner membrane. It catalyses the reaction putrescine(in) + H(+)(in) = putrescine(out) + H(+)(out). Functionally, putrescine importer. This Escherichia coli O157:H7 protein is Low-affinity putrescine importer PlaP (plaP).